Here is a 477-residue protein sequence, read N- to C-terminus: Glycogen synthase (477 aa).

Lysine 15 lines the ADP-alpha-D-glucose pocket.

This sequence belongs to the glycosyltransferase 1 family. Bacterial/plant glycogen synthase subfamily.

The catalysed reaction is [(1-&gt;4)-alpha-D-glucosyl](n) + ADP-alpha-D-glucose = [(1-&gt;4)-alpha-D-glucosyl](n+1) + ADP + H(+). It participates in glycan biosynthesis; glycogen biosynthesis. In terms of biological role, synthesizes alpha-1,4-glucan chains using ADP-glucose. The polypeptide is Glycogen synthase (Streptococcus pneumoniae serotype 2 (strain D39 / NCTC 7466)).